The sequence spans 855 residues: Serine/threonine-protein kinase HAL5 (855 aa).

2 disordered regions span residues M1–Q166 and R214–T261. Phosphoserine is present on residues S17 and S19. The span at I31–G45 shows a compositional bias: polar residues. The segment covering I57–V74 has biased composition (low complexity). 2 positions are modified to phosphoserine: S68 and S72. The span at L94–F114 shows a compositional bias: polar residues. Basic and acidic residues predominate over residues L125 to A139. S160 is subject to Phosphoserine. Residues G248 to G258 show a composition bias toward low complexity. Phosphoserine is present on residues S273, S277, S324, S333, S336, S358, S391, and S395. The disordered stretch occupies residues N319–N347. 2 disordered regions span residues S401–N427 and L457–P497. Residues T462–N474 are compositionally biased toward polar residues. One can recognise a Protein kinase domain in the interval G503 to M837. ATP contacts are provided by residues V509–V517 and K546. The Proton acceptor role is filled by D688.

Belongs to the protein kinase superfamily. CAMK Ser/Thr protein kinase family. NPR/HAL subfamily. HAL5 sub-subfamily.

The catalysed reaction is L-seryl-[protein] + ATP = O-phospho-L-seryl-[protein] + ADP + H(+). It catalyses the reaction L-threonyl-[protein] + ATP = O-phospho-L-threonyl-[protein] + ADP + H(+). Functionally, protein kinase involved in salt tolerance and pH sensitivity, probably by regulating plasma membrane potential and cation influx. Positively controls the TRK1-TRK2 potassium transport system in response to potassium starvation. Stabilizes TRK1 in the plasma membrane by preventing its vacuolar sorting and degradation. Also stabilizes other plasma membrane nutrient transporters like CAN1, FUR4 and HXT1. May itself be subject to regulation by ARL1. This chain is Serine/threonine-protein kinase HAL5 (HAL5), found in Saccharomyces cerevisiae (strain YJM789) (Baker's yeast).